The chain runs to 768 residues: Kelch domain-containing protein 7A (768 aa).

The chain crosses the membrane as a helical span at residues 12-29; it reads VVLSAAALLLVTVAYRLY. The segment at 35–210 is disordered; sequence PAQRWGGNAQ…PAPLQGSSDM (176 aa). A Phosphoserine modification is found at Ser-77. Residues 104 to 118 show a composition bias toward basic and acidic residues; it reads TDRKSQRKGSGEERG. Asn-248 is a glycosylation site (N-linked (GlcNAc...) asparagine). The interval 304–352 is disordered; the sequence is LTEVPSPRPPPRSLGTGAASGGQAGDTKGAAERAASPQPGPSPSTRGFS. The Kelch 1 repeat unit spans residues 319-365; it reads TGAASGGQAGDTKGAAERAASPQPGPSPSTRGFSRKESLLQIAENPE. At Ser-356 the chain carries Phosphoserine. Residues 371–395 are disordered; sequence DGFWLPAPPCPDPGALPGSGRSSQE. Kelch repeat units lie at residues 483 to 529, 532 to 580, 581 to 623, and 626 to 668; these read QYLV…ICSL, YLFV…ALDG, HLYA…ATAC, and EIFV…AVNG.

It localises to the membrane. In Pongo abelii (Sumatran orangutan), this protein is Kelch domain-containing protein 7A (KLHDC7A).